We begin with the raw amino-acid sequence, 203 residues long: Holliday junction branch migration complex subunit RuvA (203 aa).

Residues 1 to 63 (MIGQLSGKVD…EEHIHLYGFL (63 aa)) form a domain I region. Residues 64–142 (NLEEKIFFNL…KISSGSAIIK (79 aa)) form a domain II region. The tract at residues 143–149 (ESLNIKH) is flexible linker. A domain III region spans residues 150–203 (ITPVASNEVIKALVNLGFSRFEAQNAVQGIITQNPEISIDELIKTALKNRNSNF).

This sequence belongs to the RuvA family. In terms of assembly, homotetramer. Forms an RuvA(8)-RuvB(12)-Holliday junction (HJ) complex. HJ DNA is sandwiched between 2 RuvA tetramers; dsDNA enters through RuvA and exits via RuvB. An RuvB hexamer assembles on each DNA strand where it exits the tetramer. Each RuvB hexamer is contacted by two RuvA subunits (via domain III) on 2 adjacent RuvB subunits; this complex drives branch migration. In the full resolvosome a probable DNA-RuvA(4)-RuvB(12)-RuvC(2) complex forms which resolves the HJ.

Its subcellular location is the cytoplasm. In terms of biological role, the RuvA-RuvB-RuvC complex processes Holliday junction (HJ) DNA during genetic recombination and DNA repair, while the RuvA-RuvB complex plays an important role in the rescue of blocked DNA replication forks via replication fork reversal (RFR). RuvA specifically binds to HJ cruciform DNA, conferring on it an open structure. The RuvB hexamer acts as an ATP-dependent pump, pulling dsDNA into and through the RuvAB complex. HJ branch migration allows RuvC to scan DNA until it finds its consensus sequence, where it cleaves and resolves the cruciform DNA. The sequence is that of Holliday junction branch migration complex subunit RuvA from Rickettsia africae (strain ESF-5).